A 200-amino-acid chain; its full sequence is Recombination protein RecR (200 aa).

A C4-type zinc finger spans residues 59 to 74 (CGTCGSLDVTDPCAVC). Residues 82-177 (RLLCVVEEVG…PVTMLARGVP (96 aa)) form the Toprim domain.

It belongs to the RecR family.

Its function is as follows. May play a role in DNA repair. It seems to be involved in an RecBC-independent recombinational process of DNA repair. It may act with RecF and RecO. In Caulobacter vibrioides (strain ATCC 19089 / CIP 103742 / CB 15) (Caulobacter crescentus), this protein is Recombination protein RecR.